The primary structure comprises 237 residues: Phosphoribosylaminoimidazole-succinocarboxamide synthase (237 aa).

Belongs to the SAICAR synthetase family.

The enzyme catalyses 5-amino-1-(5-phospho-D-ribosyl)imidazole-4-carboxylate + L-aspartate + ATP = (2S)-2-[5-amino-1-(5-phospho-beta-D-ribosyl)imidazole-4-carboxamido]succinate + ADP + phosphate + 2 H(+). Its pathway is purine metabolism; IMP biosynthesis via de novo pathway; 5-amino-1-(5-phospho-D-ribosyl)imidazole-4-carboxamide from 5-amino-1-(5-phospho-D-ribosyl)imidazole-4-carboxylate: step 1/2. This chain is Phosphoribosylaminoimidazole-succinocarboxamide synthase, found in Pseudomonas fluorescens (strain Pf0-1).